A 164-amino-acid chain; its full sequence is MGLLAAIGVLLPFPFYWWLWTNAQSWVNLCGRERDPSTVMARVSHVLKAAQLLSLFSVASLSWPPPLYFWPLMAFGQFLNFRVYQLLGEAGTYYGVRFGKNIPWVTEFPFGVIRDPQYVGSIMSLLACLSWVPFQYILLWSLGYVFMMFLESKEDPNARAKSIS.

Residues 1 to 21 (MGLLAAIGVLLPFPFYWWLWT) constitute an intramembrane region (helical). The Lumenal portion of the chain corresponds to 22–30 (NAQSWVNLC). Residues 31 to 52 (GRERDPSTVMARVSHVLKAAQL) form a helical membrane-spanning segment. Residues 53–69 (LSLFSVASLSWPPPLYF) lie on the Cytoplasmic side of the membrane. A helical transmembrane segment spans residues 70-90 (WPLMAFGQFLNFRVYQLLGEA). 74 to 76 (AFG) is an S-adenosyl-L-methionine binding site. At 91–131 (GTYYGVRFGKNIPWVTEFPFGVIRDPQYVGSIMSLLACLSW) the chain is on the lumenal side. A helical membrane pass occupies residues 132–151 (VPFQYILLWSLGYVFMMFLE). The Cytoplasmic portion of the chain corresponds to 152 to 164 (SKEDPNARAKSIS). 154–155 (ED) provides a ligand contact to S-adenosyl-L-methionine.

The protein belongs to the class VI-like SAM-binding methyltransferase superfamily. PEMT/PEM2 methyltransferase family.

The protein localises to the endoplasmic reticulum membrane. The catalysed reaction is a 1,2-diacyl-sn-glycero-3-phospho-N-methylethanolamine + S-adenosyl-L-methionine = a 1,2-diacyl-sn-glycero-3-phospho-N,N-dimethylethanolamine + S-adenosyl-L-homocysteine + H(+). It catalyses the reaction a 1,2-diacyl-sn-glycero-3-phospho-N,N-dimethylethanolamine + S-adenosyl-L-methionine = a 1,2-diacyl-sn-glycero-3-phosphocholine + S-adenosyl-L-homocysteine + H(+). It participates in phospholipid metabolism; phosphatidylcholine biosynthesis. Catalyzes the second two steps of the methylation pathway of phosphatidylcholine biosynthesis, the SAM-dependent methylation of phosphatidylmonomethylethanolamine (PMME) to phosphatidyldimethylethanolamine (PDME) and of PDME to phosphatidylcholine (PC). In Arabidopsis thaliana (Mouse-ear cress), this protein is Phosphatidyl-N-methylethanolamine N-methyltransferase (PLMT).